The sequence spans 151 residues: Ribosome maturation factor RimP (151 aa).

It belongs to the RimP family.

The protein localises to the cytoplasm. Its function is as follows. Required for maturation of 30S ribosomal subunits. This chain is Ribosome maturation factor RimP, found in Aliivibrio salmonicida (strain LFI1238) (Vibrio salmonicida (strain LFI1238)).